We begin with the raw amino-acid sequence, 367 residues long: 4-hydroxyphenylpyruvate dioxygenase (367 aa).

VOC domains are found at residues 3–135 (GFDH…FVDR) and 166–324 (LIDH…IFTN). Fe cation contacts are provided by His-169, His-252, and Glu-335.

The protein belongs to the 4HPPD family. It depends on Fe cation as a cofactor.

The enzyme catalyses 3-(4-hydroxyphenyl)pyruvate + O2 = homogentisate + CO2. The protein operates within amino-acid degradation; L-phenylalanine degradation; acetoacetate and fumarate from L-phenylalanine: step 3/6. Functionally, key enzyme in the degradation of tyrosine. In Dictyostelium discoideum (Social amoeba), this protein is 4-hydroxyphenylpyruvate dioxygenase (hpd).